The sequence spans 876 residues: Leucine--tRNA ligase (876 aa).

The short motif at 42-52 (PYPSGKLHMGH) is the 'HIGH' region element. The short motif at 634–638 (KMSKS) is the 'KMSKS' region element. Lys637 is an ATP binding site.

It belongs to the class-I aminoacyl-tRNA synthetase family.

Its subcellular location is the cytoplasm. The catalysed reaction is tRNA(Leu) + L-leucine + ATP = L-leucyl-tRNA(Leu) + AMP + diphosphate. This Neisseria gonorrhoeae (strain NCCP11945) protein is Leucine--tRNA ligase.